Consider the following 239-residue polypeptide: Purine nucleoside phosphorylase DeoD-type (239 aa).

Histidine 5 serves as a coordination point for a purine D-ribonucleoside. Phosphate is bound by residues glycine 21, arginine 25, arginine 44, and 88–91; that span reads RIGS. A purine D-ribonucleoside contacts are provided by residues 180-182 and 204-205; these read EME and TD. Residue aspartate 205 is the Proton donor of the active site.

It belongs to the PNP/UDP phosphorylase family. Homohexamer; trimer of homodimers.

It carries out the reaction a purine D-ribonucleoside + phosphate = a purine nucleobase + alpha-D-ribose 1-phosphate. It catalyses the reaction a purine 2'-deoxy-D-ribonucleoside + phosphate = a purine nucleobase + 2-deoxy-alpha-D-ribose 1-phosphate. Its function is as follows. Catalyzes the reversible phosphorolytic breakdown of the N-glycosidic bond in the beta-(deoxy)ribonucleoside molecules, with the formation of the corresponding free purine bases and pentose-1-phosphate. The polypeptide is Purine nucleoside phosphorylase DeoD-type (Aliivibrio fischeri (strain ATCC 700601 / ES114) (Vibrio fischeri)).